The chain runs to 311 residues: Methionyl-tRNA formyltransferase (311 aa).

Residue 110-113 (SLLP) coordinates (6S)-5,6,7,8-tetrahydrofolate.

Belongs to the Fmt family.

It catalyses the reaction L-methionyl-tRNA(fMet) + (6R)-10-formyltetrahydrofolate = N-formyl-L-methionyl-tRNA(fMet) + (6S)-5,6,7,8-tetrahydrofolate + H(+). Its function is as follows. Attaches a formyl group to the free amino group of methionyl-tRNA(fMet). The formyl group appears to play a dual role in the initiator identity of N-formylmethionyl-tRNA by promoting its recognition by IF2 and preventing the misappropriation of this tRNA by the elongation apparatus. This is Methionyl-tRNA formyltransferase from Streptococcus pneumoniae (strain Taiwan19F-14).